Here is a 229-residue protein sequence, read N- to C-terminus: Large ribosomal subunit protein uL1 (229 aa).

Belongs to the universal ribosomal protein uL1 family. In terms of assembly, part of the 50S ribosomal subunit.

Its function is as follows. Binds directly to 23S rRNA. The L1 stalk is quite mobile in the ribosome, and is involved in E site tRNA release. Protein L1 is also a translational repressor protein, it controls the translation of the L11 operon by binding to its mRNA. This chain is Large ribosomal subunit protein uL1, found in Pelagibacter ubique (strain HTCC1062).